The sequence spans 690 residues: Eukaryotic translation initiation factor 3 subunit B (690 aa).

A compositionally biased stretch (basic and acidic residues) spans 1 to 11 (MAKKKSEEHSG). Residues 1–36 (MAKKKSEEHSGADANDSDYQEEPNFEDPPGFVDNIS) are disordered. Over residues 15–25 (NDSDYQEEPNF) the composition is skewed to acidic residues. The region spanning 57 to 141 (SVVVVDNIPK…HTFAVNLFTD (85 aa)) is the RRM domain. WD repeat units lie at residues 207 to 246 (TRER…KIQK), 293 to 331 (DGMS…LLDL), 334 to 369 (IKIP…TLME), 442 to 484 (EIRE…KPSL), and 530 to 575 (PDHF…IKRT). Residues 595–645 (EEKQKEIKKNLKKYYAAFEQKDRLRLTRASKELLEKRSQLRETFMEYRNKR) adopt a coiled-coil conformation.

The protein belongs to the eIF-3 subunit B family. Component of the eukaryotic translation initiation factor 3 (eIF-3) complex. The eIF-3 complex interacts with pix. Interacts with mxt.

The protein localises to the cytoplasm. Its function is as follows. RNA-binding component of the eukaryotic translation initiation factor 3 (eIF-3) complex, which is involved in protein synthesis of a specialized repertoire of mRNAs and, together with other initiation factors, stimulates binding of mRNA and methionyl-tRNAi to the 40S ribosome. The eIF-3 complex specifically targets and initiates translation of a subset of mRNAs involved in cell proliferation. This chain is Eukaryotic translation initiation factor 3 subunit B, found in Drosophila yakuba (Fruit fly).